Reading from the N-terminus, the 157-residue chain is Heat shock 22 kDa protein, chloroplastic (157 aa).

The 116-residue stretch at 40 to 155 (GKAGHTHAPM…KPEPKRIAVT (116 aa)) folds into the sHSP domain.

Belongs to the small heat shock protein (HSP20) family.

The protein resides in the plastid. The protein localises to the chloroplast. The sequence is that of Heat shock 22 kDa protein, chloroplastic from Chlamydomonas reinhardtii (Chlamydomonas smithii).